The primary structure comprises 197 residues: Recombination protein RecR (197 aa).

The C4-type zinc finger occupies 56–71; that stretch reads CERCNTFTETEICQRC. The Toprim domain occupies 79-174; that stretch reads SLLCVVEMPA…RVSRLSRGVP (96 aa).

It belongs to the RecR family.

May play a role in DNA repair. It seems to be involved in an RecBC-independent recombinational process of DNA repair. It may act with RecF and RecO. The protein is Recombination protein RecR of Aromatoleum aromaticum (strain DSM 19018 / LMG 30748 / EbN1) (Azoarcus sp. (strain EbN1)).